Here is a 134-residue protein sequence, read N- to C-terminus: Probable glycine cleavage system H protein (134 aa).

One can recognise a Lipoyl-binding domain in the interval threonine 29–lysine 110. Lysine 70 carries the post-translational modification N6-lipoyllysine.

This sequence belongs to the GcvH family. The glycine cleavage system is composed of four proteins: P, T, L and H. (R)-lipoate is required as a cofactor.

In terms of biological role, the glycine cleavage system catalyzes the degradation of glycine. The H protein shuttles the methylamine group of glycine from the P protein to the T protein. The chain is Probable glycine cleavage system H protein from Pyrococcus furiosus (strain ATCC 43587 / DSM 3638 / JCM 8422 / Vc1).